Consider the following 259-residue polypeptide: 1,2-dihydroxy-1,2-dihydronaphthalene dehydrogenase (259 aa).

8-32 lines the NAD(+) pocket; that stretch reads SITGAGSGIGLELVRSFKSAGYYVS. Substrate is bound at residue S140. The active-site Proton acceptor is the Y153.

It belongs to the short-chain dehydrogenases/reductases (SDR) family.

It carries out the reaction (1R,2S)-1,2-dihydronaphthalene-1,2-diol + NAD(+) = naphthalene-1,2-diol + NADH + H(+). The catalysed reaction is cis-1,2-dihydroxy-1,2-dihydrodibenzothiophene + NAD(+) = 1,2-dihydroxydibenzothiophene + NADH + H(+). It functions in the pathway aromatic compound metabolism; naphthalene degradation. In terms of biological role, catalyzes the oxidation of naphthalene dihydrodiol into 1,2-dihydroxynaphthalene. This Pseudomonas putida (Arthrobacter siderocapsulatus) protein is 1,2-dihydroxy-1,2-dihydronaphthalene dehydrogenase (nahB).